Reading from the N-terminus, the 203-residue chain is Calcineurin B-like protein 5 (203 aa).

Glycine 2 is lipidated: N-myristoyl glycine. EF-hand domains lie at 30–65 (EVEV…KNTK), 66–101 (KRSL…FHPN), 103–138 (SPRD…VLEE), and 147–182 (IIDS…YPLT).

The protein belongs to the calcineurin regulatory subunit family. Homodimer. Interacts with PP2CA, CIPK2, CIPK11, CIPK23 and CIPK24. Post-translationally, both N-myristoylation and calcium-mediated conformational changes are essential for its function. As to expression, expressed in green tissues, but not in the roots.

Its subcellular location is the cytoplasm. It is found in the nucleus. Its function is as follows. Acts as a calcium sensor. CBL proteins interact with CIPK serine-threonine protein kinases. Binding of a CBL protein to the regulatory NAF domain of a CIPK protein lead to the activation of the kinase in a calcium-dependent manner. May function as a positive regulator of salt or drought responses. The protein is Calcineurin B-like protein 5 (CBL5) of Arabidopsis thaliana (Mouse-ear cress).